Reading from the N-terminus, the 232-residue chain is Single-stranded DNA-binding protein (232 aa).

Acidic residues-rich tracts occupy residues 190–200 and 216–232; these read GEDEWADEVED and EWQE…DEDF. Positions 190 to 232 are disordered; it reads GEDEWADEVEDGGYTASESRQSRDEQEWQEDEHEETPDDDEDF. The tract at residues 213-232 is dimerization and interaction with the viral DNA polymerase and helicase; it reads DEQEWQEDEHEETPDDDEDF.

Belongs to the Teseptimavirus single-stranded DNA-binding protein family. In terms of assembly, homodimer. Interacts (via C-terminus) with the viral DNA polymerase. Interacts with the viral helicase/primase. Part of the replicase complex that includes the DNA polymerase, the primase/helicase and the single-stranded DNA binding protein.

In terms of biological role, single-stranded DNA-binding protein that participates in viral DNA replication, formation of concatemers, recombination and repair of double-stranded breaks. Coats the lagging-strand ssDNA as the replication fork advances and stimulates the activities of viral DNA polymerase and primase/helicase. Coordinates simultaneous synthesis of leading- and lagging-strands. Together with DNA primase/helicase, promotes pairing of two homologous DNA molecules containing complementary single-stranded regions and mediates homologous DNA strand exchange. Also promotes the formation of joint molecules. Disrupts loops, hairpins and other secondary structures present on ssDNA to reduce and eliminate pausing of viral DNA polymerase at specific sites during elongation. The sequence is that of Single-stranded DNA-binding protein (2.5) from Enterobacteria phage T3 (Bacteriophage T3).